We begin with the raw amino-acid sequence, 144 residues long: Large ribosomal subunit protein uL15 (144 aa).

The tract at residues 1–49 is disordered; it reads MKLNTLSPAAGAKSAAKRVGRGIGSGLGKTAGRGHKGQKSRSGGGVRVG. The span at 21–31 shows a compositional bias: gly residues; it reads RGIGSGLGKTA.

This sequence belongs to the universal ribosomal protein uL15 family. As to quaternary structure, part of the 50S ribosomal subunit.

Its function is as follows. Binds to the 23S rRNA. This chain is Large ribosomal subunit protein uL15, found in Shewanella loihica (strain ATCC BAA-1088 / PV-4).